Consider the following 268-residue polypeptide: Interleukin-1 beta (268 aa).

Residues 1-116 (MATVPELTSE…TWDDYSLECD (116 aa)) constitute a propeptide that is removed on maturation.

This sequence belongs to the IL-1 family. Monomer. In its precursor form, weakly interacts with full-length MEFV; the mature cytokine does not interact at all. Interacts with integrins ITGAV:ITGBV and ITGA5:ITGB1; integrin-binding is required for IL1B signaling. Interacts with cargo receptor TMED10; the interaction is direct and is required for the secretion of IL1B mature form. Interacts with HSP90AB1; the interaction facilitates cargo translocation into the ERGIC. Interacts with HSP90B1; the interaction facilitates cargo translocation into the ERGIC.

Its subcellular location is the cytoplasm. The protein localises to the cytosol. It localises to the secreted. It is found in the lysosome. The protein resides in the extracellular exosome. In terms of biological role, potent pro-inflammatory cytokine. Initially discovered as the major endogenous pyrogen, induces prostaglandin synthesis, neutrophil influx and activation, T-cell activation and cytokine production, B-cell activation and antibody production, and fibroblast proliferation and collagen production. Promotes Th17 differentiation of T-cells. Synergizes with IL12/interleukin-12 to induce IFNG synthesis from T-helper 1 (Th1) cells. Plays a role in angiogenesis by inducing VEGF production synergistically with TNF and IL6. Involved in transduction of inflammation downstream of pyroptosis: its mature form is specifically released in the extracellular milieu by passing through the gasdermin-D (GSDMD) pore. This chain is Interleukin-1 beta (IL1B), found in Oryctolagus cuniculus (Rabbit).